A 375-amino-acid chain; its full sequence is Quinolinate synthase (375 aa).

Iminosuccinate contacts are provided by His-47 and Ser-64. Cys-110 contributes to the [4Fe-4S] cluster binding site. Iminosuccinate is bound by residues 144–146 (YVN) and Ser-165. Cys-235 provides a ligand contact to [4Fe-4S] cluster. Iminosuccinate contacts are provided by residues 261–263 (HPE) and Thr-278. Position 325 (Cys-325) interacts with [4Fe-4S] cluster.

It belongs to the quinolinate synthase family. Type 3 subfamily. [4Fe-4S] cluster serves as cofactor.

The protein resides in the cytoplasm. It carries out the reaction iminosuccinate + dihydroxyacetone phosphate = quinolinate + phosphate + 2 H2O + H(+). It participates in cofactor biosynthesis; NAD(+) biosynthesis; quinolinate from iminoaspartate: step 1/1. Catalyzes the condensation of iminoaspartate with dihydroxyacetone phosphate to form quinolinate. The sequence is that of Quinolinate synthase from Herpetosiphon aurantiacus (strain ATCC 23779 / DSM 785 / 114-95).